We begin with the raw amino-acid sequence, 317 residues long: Dehydrogenase/reductase SDR family member 12 (317 aa).

2 residues coordinate NAD(+): Ser50 and Ile52. Residue Ser175 participates in substrate binding. NAD(+) is bound by residues Tyr201, Lys205, and Thr234. Tyr201 (proton acceptor) is an active-site residue.

The protein belongs to the short-chain dehydrogenases/reductases (SDR) family.

Putative oxidoreductase. This chain is Dehydrogenase/reductase SDR family member 12 (DHRS12), found in Bos taurus (Bovine).